Reading from the N-terminus, the 278-residue chain is MSAVIRVDSLNKTFARKQALFNLRLEIQAGEMVALIGASGSGKSTLLRHVAGLARCDRDNGGSIDVLGRRLQASGRLSGEVRRLRADIGYIFQQFNLVNRLSVLDNVLLGFLGRMPRWRGSLGLFSAEQKRQALEALARVGLADFAGQRASTLSGGQQQRVAIARALTQKAEVILADEPIASLDPESARKVMDILADINRHDGKTVVVTLHQVDYALRYCPRAVALKGGRILFDGSSEYLSEGFLNELYGAEGDTPLLFSDRARRGAESQPELTLARA.

Positions 5–253 (IRVDSLNKTF…FLNELYGAEG (249 aa)) constitute an ABC transporter domain. 37–44 (GASGSGKS) lines the ATP pocket.

This sequence belongs to the ABC transporter superfamily. Phosphonates importer (TC 3.A.1.9.1) family. The complex is composed of two ATP-binding proteins (PhnC), two transmembrane proteins (PhnE) and a solute-binding protein (PhnD).

It is found in the cell inner membrane. The catalysed reaction is phosphonate(out) + ATP + H2O = phosphonate(in) + ADP + phosphate + H(+). Its function is as follows. Part of the ABC transporter complex PhnCDE involved in phosphonates import. Responsible for energy coupling to the transport system. In Pseudomonas aeruginosa (strain ATCC 15692 / DSM 22644 / CIP 104116 / JCM 14847 / LMG 12228 / 1C / PRS 101 / PAO1), this protein is Phosphonates import ATP-binding protein PhnC 2.